Here is a 136-residue protein sequence, read N- to C-terminus: Small ribosomal subunit protein uS8c (136 aa).

The protein belongs to the universal ribosomal protein uS8 family. As to quaternary structure, part of the 30S ribosomal subunit.

It localises to the plastid. The protein localises to the chloroplast. One of the primary rRNA binding proteins, it binds directly to 16S rRNA central domain where it helps coordinate assembly of the platform of the 30S subunit. The sequence is that of Small ribosomal subunit protein uS8c (rps8) from Citrus sinensis (Sweet orange).